A 412-amino-acid chain; its full sequence is Mast cell carboxypeptidase A (412 aa).

An N-terminal signal peptide occupies residues Leu1–Ala10. Residues Ile11 to Glu104 constitute a propeptide, activation peptide. The Peptidase M14 domain maps to Lys113–Ile407. Disulfide bonds link Cys168–Cys181 and Cys240–Cys263. Positions 171 and 174 each coordinate Zn(2+). A Zn(2+)-binding site is contributed by His299. The active-site Proton donor/acceptor is Glu373.

This sequence belongs to the peptidase M14 family. Zn(2+) is required as a cofactor.

It is found in the cytoplasmic vesicle. Its subcellular location is the secretory vesicle. The enzyme catalyses Release of a C-terminal amino acid, but little or no action with -Asp, -Glu, -Arg, -Lys or -Pro.. This chain is Mast cell carboxypeptidase A (Cpa3), found in Rattus norvegicus (Rat).